The chain runs to 330 residues: DNA-directed RNA polymerase subunit alpha (330 aa).

The tract at residues M1 to R236 is alpha N-terminal domain (alpha-NTD). Residues F250–D330 form an alpha C-terminal domain (alpha-CTD) region.

The protein belongs to the RNA polymerase alpha chain family. As to quaternary structure, homodimer. The RNAP catalytic core consists of 2 alpha, 1 beta, 1 beta' and 1 omega subunit. When a sigma factor is associated with the core the holoenzyme is formed, which can initiate transcription.

The catalysed reaction is RNA(n) + a ribonucleoside 5'-triphosphate = RNA(n+1) + diphosphate. Functionally, DNA-dependent RNA polymerase catalyzes the transcription of DNA into RNA using the four ribonucleoside triphosphates as substrates. The chain is DNA-directed RNA polymerase subunit alpha from Vibrio parahaemolyticus serotype O3:K6 (strain RIMD 2210633).